The chain runs to 598 residues: NADH-quinone oxidoreductase subunit C/D (598 aa).

The interval 1–189 (MTDSTTHDRE…DPFELTRQKQ (189 aa)) is NADH dehydrogenase I subunit C. The tract at residues 213-598 (DFMFLNLGPN…IDFVMSDVDR (386 aa)) is NADH dehydrogenase I subunit D.

It in the N-terminal section; belongs to the complex I 30 kDa subunit family. This sequence in the C-terminal section; belongs to the complex I 49 kDa subunit family. NDH-1 is composed of 13 different subunits. Subunits NuoB, CD, E, F, and G constitute the peripheral sector of the complex.

It is found in the cell inner membrane. The enzyme catalyses a quinone + NADH + 5 H(+)(in) = a quinol + NAD(+) + 4 H(+)(out). In terms of biological role, NDH-1 shuttles electrons from NADH, via FMN and iron-sulfur (Fe-S) centers, to quinones in the respiratory chain. The immediate electron acceptor for the enzyme in this species is believed to be ubiquinone. Couples the redox reaction to proton translocation (for every two electrons transferred, four hydrogen ions are translocated across the cytoplasmic membrane), and thus conserves the redox energy in a proton gradient. In Edwardsiella ictaluri (strain 93-146), this protein is NADH-quinone oxidoreductase subunit C/D.